The chain runs to 133 residues: Cell division protein FtsL (133 aa).

Over 1 to 45 (MAVEKVYQPYDEQVYNSIPKQQPQTKPEKKTVSRKVVVQLTKFEK) the chain is Cytoplasmic. A helical membrane pass occupies residues 46–65 (VLYITLITVIAMLSIYMLSL). The Extracellular portion of the chain corresponds to 66-133 (KMDAYDTRGK…VVRSNGEAKN (68 aa)).

This sequence belongs to the FtsL family.

The protein resides in the cell membrane. In terms of biological role, essential cell division protein. The protein is Cell division protein FtsL of Staphylococcus aureus (strain NCTC 8325 / PS 47).